We begin with the raw amino-acid sequence, 133 residues long: Small ribosomal subunit protein uS11 (133 aa).

Belongs to the universal ribosomal protein uS11 family. Part of the 30S ribosomal subunit. Interacts with proteins S7 and S18. Binds to IF-3.

In terms of biological role, located on the platform of the 30S subunit, it bridges several disparate RNA helices of the 16S rRNA. Forms part of the Shine-Dalgarno cleft in the 70S ribosome. The chain is Small ribosomal subunit protein uS11 from Bordetella petrii (strain ATCC BAA-461 / DSM 12804 / CCUG 43448).